The chain runs to 331 residues: Ornithine carbamoyltransferase (331 aa).

Carbamoyl phosphate-binding positions include 55-58 (STRT), glutamine 82, arginine 106, and 133-136 (HPTQ). L-ornithine is bound by residues asparagine 166, aspartate 230, and 234–235 (SM). Residues 272–273 (CL) and arginine 317 each bind carbamoyl phosphate.

It belongs to the aspartate/ornithine carbamoyltransferase superfamily. OTCase family.

The protein localises to the cytoplasm. The enzyme catalyses carbamoyl phosphate + L-ornithine = L-citrulline + phosphate + H(+). Its pathway is amino-acid biosynthesis; L-arginine biosynthesis; L-arginine from L-ornithine and carbamoyl phosphate: step 1/3. Its function is as follows. Reversibly catalyzes the transfer of the carbamoyl group from carbamoyl phosphate (CP) to the N(epsilon) atom of ornithine (ORN) to produce L-citrulline. In Neisseria gonorrhoeae (strain ATCC 700825 / FA 1090), this protein is Ornithine carbamoyltransferase.